Reading from the N-terminus, the 121-residue chain is Large ribosomal subunit protein bL12 (121 aa).

It belongs to the bacterial ribosomal protein bL12 family. Homodimer. Part of the ribosomal stalk of the 50S ribosomal subunit. Forms a multimeric L10(L12)X complex, where L10 forms an elongated spine to which 2 to 4 L12 dimers bind in a sequential fashion. Binds GTP-bound translation factors.

Functionally, forms part of the ribosomal stalk which helps the ribosome interact with GTP-bound translation factors. Is thus essential for accurate translation. This is Large ribosomal subunit protein bL12 from Halalkalibacterium halodurans (strain ATCC BAA-125 / DSM 18197 / FERM 7344 / JCM 9153 / C-125) (Bacillus halodurans).